Here is a 265-residue protein sequence, read N- to C-terminus: (-)-isopiperitenol/(-)-carveol dehydrogenase, mitochondrial (265 aa).

A mitochondrion-targeting transit peptide spans 1-30 (MASVKKLAGKVAIVTGGASGIGEVTARLFA). 13 to 38 (IVTGGASGIGEVTARLFAERGARAVV) provides a ligand contact to NAD(+). Ser147 serves as a coordination point for substrate. Tyr160 serves as the catalytic Proton acceptor.

It belongs to the short-chain dehydrogenases/reductases (SDR) family. Homodimer and homotetramer. As to expression, peltate glandular trichomes.

It localises to the mitochondrion. The catalysed reaction is (1S,6R)-isopiperitenol + NAD(+) = (6R)-isopiperitenone + NADH + H(+). It carries out the reaction (1S,5R)-carveol + NADP(+) = (R)-carvone + NADPH + H(+). Involved in the biosynthesis of menthol and related monoterpenes in leaves. Can use (-)-trans-carveol and, with a lower relative velocity, (-)-trans-isopiperitenol, (+)-neomenthol, (+)-neoisomenthol and (-)-cis-isopiperitenol as substrates, but not (-)-cis-carvenol, (-)-menthol, (+)-isomenthol, 7-hydroxy-limonene, (-)-isopiperitenone or (-)-carvone. The polypeptide is (-)-isopiperitenol/(-)-carveol dehydrogenase, mitochondrial (Mentha piperita (Peppermint)).